A 141-amino-acid polypeptide reads, in one-letter code: Small ribosomal subunit protein uS8 (141 aa).

The protein belongs to the universal ribosomal protein uS8 family. Part of the 30S ribosomal subunit. Contacts proteins S5 and S12.

Functionally, one of the primary rRNA binding proteins, it binds directly to 16S rRNA central domain where it helps coordinate assembly of the platform of the 30S subunit. In Mycoplasma genitalium (strain ATCC 33530 / DSM 19775 / NCTC 10195 / G37) (Mycoplasmoides genitalium), this protein is Small ribosomal subunit protein uS8.